A 117-amino-acid chain; its full sequence is Large ribosomal subunit protein uL18 (117 aa).

The protein belongs to the universal ribosomal protein uL18 family. Part of the 50S ribosomal subunit; part of the 5S rRNA/L5/L18/L25 subcomplex. Contacts the 5S and 23S rRNAs.

In terms of biological role, this is one of the proteins that bind and probably mediate the attachment of the 5S RNA into the large ribosomal subunit, where it forms part of the central protuberance. The protein is Large ribosomal subunit protein uL18 of Vibrio cholerae serotype O1 (strain ATCC 39541 / Classical Ogawa 395 / O395).